We begin with the raw amino-acid sequence, 261 residues long: (R)-S-adenosyl-L-methionine hydrolase (261 aa).

3 residues coordinate adenosine: Asp-12, Asp-72, and Asn-187. (R)-S-adenosyl-L-methionine is bound by residues Asn-187, Ser-231, and Val-239. Position 239 (Val-239) interacts with adenosine.

It belongs to the SAM hydrolase / SAM-dependent halogenase family.

The enzyme catalyses (R)-S-adenosyl-L-methionine + H2O = adenosine + L-methionine + H(+). Specifically hydrolyzes (R)-S-adenosyl-L-methionine ((R)-SAM), the inactive form of the ubiquitous cofactor SAM, into adenosine and L-methionine. Is stereoselective as it cannot use the active form of SAM, (S)-S-adenosyl-L-methionine, as substrate. Likely plays a role in preventing accumulation of (R)-S-adenosyl-L-methionine in cells; maintenance of (S)-S-denosyl-L-methionine homochirality is important for cellular health given that the (R)-form is largely inactive as a methyl donor and can function as an inhibitor of methyltransferases. This Salinispora tropica (strain ATCC BAA-916 / DSM 44818 / JCM 13857 / NBRC 105044 / CNB-440) protein is (R)-S-adenosyl-L-methionine hydrolase.